The following is a 754-amino-acid chain: 5-methyltetrahydropteroyltriglutamate--homocysteine methyltransferase (754 aa).

5-methyltetrahydropteroyltri-L-glutamate is bound by residues 16–19 (RELK) and Lys-114. Residues 430-432 (IGS) and Glu-483 contribute to the L-homocysteine site. L-methionine is bound by residues 430-432 (IGS) and Glu-483. Residues 514–515 (RC) and Trp-560 each bind 5-methyltetrahydropteroyltri-L-glutamate. Asp-598 is an L-homocysteine binding site. Residue Asp-598 participates in L-methionine binding. Position 604 (Glu-604) interacts with 5-methyltetrahydropteroyltri-L-glutamate. Zn(2+)-binding residues include His-640, Cys-642, and Glu-664. Catalysis depends on His-693, which acts as the Proton donor. Cys-725 contributes to the Zn(2+) binding site.

This sequence belongs to the vitamin-B12 independent methionine synthase family. Zn(2+) serves as cofactor.

It catalyses the reaction 5-methyltetrahydropteroyltri-L-glutamate + L-homocysteine = tetrahydropteroyltri-L-glutamate + L-methionine. Its pathway is amino-acid biosynthesis; L-methionine biosynthesis via de novo pathway; L-methionine from L-homocysteine (MetE route): step 1/1. Catalyzes the transfer of a methyl group from 5-methyltetrahydrofolate to homocysteine resulting in methionine formation. The chain is 5-methyltetrahydropteroyltriglutamate--homocysteine methyltransferase from Aeromonas salmonicida (strain A449).